A 295-amino-acid polypeptide reads, in one-letter code: Ubiquinol-cytochrome c reductase complex assembly factor 1 (295 aa).

Belongs to the CBP3 family. In terms of assembly, interacts with UQCC2. Interacts with UQCC3. Forms a complex, named COMB/coordinator of mitochondrial CYTB biogenesis, composed of UQCC1, UQCC2, UQCC4, UQCC5 and UQCC6; stabilizes nascent cytochrome b/MT-CYB and promotes its membrane insertion. Forms a complex, named COMA, composed of UQCC1, UQCC2 and UQCC4; activates MT-CYB translation. Forms a complex, named COMC, composed of UQCC1, UQCC2; UQCC3 and UQCC4; mediates MT-CYB hemylation and association with the first nuclear-encoded CIII subunit UQCRQ. In the brain it is restricted to the olfactory bulb, the hippocampus, the piriform cortex and the Purkinje cells.

It localises to the mitochondrion inner membrane. The protein localises to the cytoplasmic vesicle. In terms of biological role, required for the assembly of the ubiquinol-cytochrome c reductase complex (mitochondrial respiratory chain complex III or cytochrome b-c1 complex). Involved in cytochrome b translation and/or stability. The chain is Ubiquinol-cytochrome c reductase complex assembly factor 1 (Uqcc1) from Mus musculus (Mouse).